Reading from the N-terminus, the 329-residue chain is Large ribosomal subunit protein uL3 (329 aa).

The protein belongs to the universal ribosomal protein uL3 family. In terms of assembly, part of the 50S ribosomal subunit. Forms a cluster with proteins L14 and L24e.

Its function is as follows. One of the primary rRNA binding proteins, it binds directly near the 3'-end of the 23S rRNA, where it nucleates assembly of the 50S subunit. This Picrophilus torridus (strain ATCC 700027 / DSM 9790 / JCM 10055 / NBRC 100828 / KAW 2/3) protein is Large ribosomal subunit protein uL3.